The chain runs to 890 residues: Translation initiation factor IF-2 (890 aa).

A disordered region spans residues 45-304 (LIDHLNQKNS…LQQGFQKPAQ (260 aa)). Residues 67 to 81 (STLNIPGTGGKSKSV) are compositionally biased toward polar residues. Over residues 92 to 217 (VKRDPQEAER…RMAEENKWTD (126 aa)) the composition is skewed to basic and acidic residues. Residues 252 to 266 (GRGRNAKAARPKKGN) show a composition bias toward basic residues. Positions 267–280 (KHSESKADREEARA) are enriched in basic and acidic residues. A tr-type G domain is found at 389–558 (PRAPVVTIMG…LLQAEVLELK (170 aa)). The G1 stretch occupies residues 398 to 405 (GHVDHGKT). 398 to 405 (GHVDHGKT) lines the GTP pocket. A G2 region spans residues 423 to 427 (GITQH). A G3 region spans residues 444–447 (DTPG). Residues 444-448 (DTPGH) and 498-501 (NKID) contribute to the GTP site. The segment at 498 to 501 (NKID) is G4. The tract at residues 534 to 536 (SAK) is G5. Lysine 808 bears the N6-acetyllysine mark.

This sequence belongs to the TRAFAC class translation factor GTPase superfamily. Classic translation factor GTPase family. IF-2 subfamily.

The protein resides in the cytoplasm. In terms of biological role, one of the essential components for the initiation of protein synthesis. Protects formylmethionyl-tRNA from spontaneous hydrolysis and promotes its binding to the 30S ribosomal subunits. Also involved in the hydrolysis of GTP during the formation of the 70S ribosomal complex. The protein is Translation initiation factor IF-2 of Escherichia fergusonii (strain ATCC 35469 / DSM 13698 / CCUG 18766 / IAM 14443 / JCM 21226 / LMG 7866 / NBRC 102419 / NCTC 12128 / CDC 0568-73).